We begin with the raw amino-acid sequence, 131 residues long: Profilin-1 (131 aa).

This sequence belongs to the profilin family. In terms of assembly, occurs in many kinds of cells as a complex with monomeric actin in a 1:1 ratio.

It is found in the cytoplasm. Its subcellular location is the cytoskeleton. Functionally, binds to actin and affects the structure of the cytoskeleton. At high concentrations, profilin prevents the polymerization of actin, whereas it enhances it at low concentrations. By binding to PIP2, it inhibits the formation of IP3 and DG. This Ricinus communis (Castor bean) protein is Profilin-1 (PRO1).